A 361-amino-acid polypeptide reads, in one-letter code: Peptide chain release factor 1 (361 aa).

Q237 is subject to N5-methylglutamine.

This sequence belongs to the prokaryotic/mitochondrial release factor family. Methylated by PrmC. Methylation increases the termination efficiency of RF1.

The protein localises to the cytoplasm. In terms of biological role, peptide chain release factor 1 directs the termination of translation in response to the peptide chain termination codons UAG and UAA. This Alcanivorax borkumensis (strain ATCC 700651 / DSM 11573 / NCIMB 13689 / SK2) protein is Peptide chain release factor 1.